We begin with the raw amino-acid sequence, 327 residues long: Tryptophan--tRNA ligase (327 aa).

Residues 9–11 (QPS) and 17–18 (GN) contribute to the ATP site. A 'HIGH' region motif is present at residues 10-18 (PSGTLTLGN). Residue D132 coordinates L-tryptophan. ATP-binding positions include 144 to 146 (GDD), I183, and 192 to 196 (KMSKS). A 'KMSKS' region motif is present at residues 192 to 196 (KMSKS).

Belongs to the class-I aminoacyl-tRNA synthetase family. As to quaternary structure, homodimer.

It localises to the cytoplasm. It catalyses the reaction tRNA(Trp) + L-tryptophan + ATP = L-tryptophyl-tRNA(Trp) + AMP + diphosphate + H(+). Catalyzes the attachment of tryptophan to tRNA(Trp). The protein is Tryptophan--tRNA ligase of Oceanobacillus iheyensis (strain DSM 14371 / CIP 107618 / JCM 11309 / KCTC 3954 / HTE831).